A 123-amino-acid chain; its full sequence is Small ribosomal subunit protein uS12 (123 aa).

Positions Ala9–Gly32 are disordered. Asp89 carries the 3-methylthioaspartic acid modification.

This sequence belongs to the universal ribosomal protein uS12 family. Part of the 30S ribosomal subunit. Contacts proteins S8 and S17. May interact with IF1 in the 30S initiation complex.

Its function is as follows. With S4 and S5 plays an important role in translational accuracy. Interacts with and stabilizes bases of the 16S rRNA that are involved in tRNA selection in the A site and with the mRNA backbone. Located at the interface of the 30S and 50S subunits, it traverses the body of the 30S subunit contacting proteins on the other side and probably holding the rRNA structure together. The combined cluster of proteins S8, S12 and S17 appears to hold together the shoulder and platform of the 30S subunit. The sequence is that of Small ribosomal subunit protein uS12 from Bradyrhizobium sp. (strain BTAi1 / ATCC BAA-1182).